Here is a 270-residue protein sequence, read N- to C-terminus: Aliphatic sulfonates import ATP-binding protein SsuB (270 aa).

The ABC transporter domain maps to 17 to 238 (LASSGLRKTF…ARGSHRLAAL (222 aa)). ATP is bound at residue 49–56 (GRSGCGKS). Residues 249–270 (APGAAPEPDPVAPLPTQLRWAH) form a disordered region.

Belongs to the ABC transporter superfamily. Aliphatic sulfonates importer (TC 3.A.1.17.2) family. In terms of assembly, the complex is composed of two ATP-binding proteins (SsuB), two transmembrane proteins (SsuC) and a solute-binding protein (SsuA).

Its subcellular location is the cell inner membrane. It carries out the reaction ATP + H2O + aliphatic sulfonate-[sulfonate-binding protein]Side 1 = ADP + phosphate + aliphatic sulfonateSide 2 + [sulfonate-binding protein]Side 1.. Its function is as follows. Part of the ABC transporter complex SsuABC involved in aliphatic sulfonates import. Responsible for energy coupling to the transport system. The sequence is that of Aliphatic sulfonates import ATP-binding protein SsuB from Pseudomonas putida (Arthrobacter siderocapsulatus).